A 290-amino-acid polypeptide reads, in one-letter code: MLRRETKPESDRPRKVRFRIASSHSGRVLKEVYEDGQAPGSLDSECASICAIDGLSDSEGQQNGHIGSEDNEQEKDQDNLLVLARTASEKAFGTRRVNILSKNGTVRGVKYKVSAGQALFNNLTKVLQQPSADLEFDRVVIYTTCLRVVRTTFERCELVRKIFQNHRVKFEEKNIALNGDYGKELDERCRRVSEAPSLPVVFIDGHYLGGAEKILSMNESGELQDLLTKIERVQHPHECPSCGGFGFLPCSVCHGSKMSVFRNCFTDAFKALKCTACNENGLQRCKNCTC.

The region spanning 127-234 (LQQPSADLEF…DLLTKIERVQ (108 aa)) is the Glutaredoxin domain.

This sequence belongs to the GRXCR1 family. In terms of tissue distribution, in the inner ear, expressed predominantly in sensory hair cells and their stereocilia bundles with higher levels in outer hair cells (OHC) at P1 and in inner hair cells (IHC) at P5. At P1, expression is prominent in each row of stereocilia within bundles including immature shorter stereocilia. Expression is also observed in apical microvilli of sensory cells at P1 and in kinocilia at P1 and P5. In the adult, expression is localized throughout the length of the stereocilia of both OHC and IHC (at protein level).

It localises to the cell projection. Its subcellular location is the stereocilium. The protein localises to the microvillus. It is found in the kinocilium. May play a role in actin filament architecture in developing stereocilia of sensory cells. This is Glutaredoxin domain-containing cysteine-rich protein 1 (Grxcr1) from Mus musculus (Mouse).